Consider the following 644-residue polypeptide: Macrolide export ATP-binding/permease protein MacB (644 aa).

Residues 4-242 (IECKNINRYF…SNVGRIQEKA (239 aa)) form the ABC transporter domain. ATP is bound at residue 40-47 (GQSGSGKS). 4 helical membrane-spanning segments follow: residues 270–290 (LLTMLGIIIGIASVVSVVALG), 524–544 (IALISLVVGGIGVMNIMLVSV), 574–594 (LICVIGGLVGVGLSAAVSLVF), and 607–627 (AMSVIGAVACSTGIGIAFGFM).

This sequence belongs to the ABC transporter superfamily. Macrolide exporter (TC 3.A.1.122) family. Homodimer.

The protein resides in the cell inner membrane. In terms of biological role, non-canonical ABC transporter that contains transmembrane domains (TMD), which form a pore in the inner membrane, and an ATP-binding domain (NBD), which is responsible for energy generation. Confers resistance against macrolides. In Neisseria meningitidis serogroup A / serotype 4A (strain DSM 15465 / Z2491), this protein is Macrolide export ATP-binding/permease protein MacB.